A 228-amino-acid polypeptide reads, in one-letter code: UPF0173 metal-dependent hydrolase PTH_1415 (228 aa).

The protein belongs to the UPF0173 family.

In Pelotomaculum thermopropionicum (strain DSM 13744 / JCM 10971 / SI), this protein is UPF0173 metal-dependent hydrolase PTH_1415.